A 456-amino-acid polypeptide reads, in one-letter code: Bifunctional protein GlmU (456 aa).

Residues 1–231 (MERTCLAIIL…EEELTGCNTR (231 aa)) are pyrophosphorylase. UDP-N-acetyl-alpha-D-glucosamine contacts are provided by residues 10-13 (LAAG), K24, Q77, and 82-83 (GT). D107 provides a ligand contact to Mg(2+). Residues G143, E157, N172, and N229 each coordinate UDP-N-acetyl-alpha-D-glucosamine. Position 229 (N229) interacts with Mg(2+). A linker region spans residues 232-252 (AELAYIERLWQQRRRHELMLA). Positions 253–456 (GVSMVAPETV…LARKIAKAAE (204 aa)) are N-acetyltransferase. Positions 318 and 336 each coordinate UDP-N-acetyl-alpha-D-glucosamine. H348 functions as the Proton acceptor in the catalytic mechanism. Positions 351 and 362 each coordinate UDP-N-acetyl-alpha-D-glucosamine. Acetyl-CoA-binding positions include A365, 371 to 372 (NY), S390, S408, and R425.

The protein in the N-terminal section; belongs to the N-acetylglucosamine-1-phosphate uridyltransferase family. This sequence in the C-terminal section; belongs to the transferase hexapeptide repeat family. In terms of assembly, homotrimer. Mg(2+) serves as cofactor.

It is found in the cytoplasm. The catalysed reaction is alpha-D-glucosamine 1-phosphate + acetyl-CoA = N-acetyl-alpha-D-glucosamine 1-phosphate + CoA + H(+). It catalyses the reaction N-acetyl-alpha-D-glucosamine 1-phosphate + UTP + H(+) = UDP-N-acetyl-alpha-D-glucosamine + diphosphate. It functions in the pathway nucleotide-sugar biosynthesis; UDP-N-acetyl-alpha-D-glucosamine biosynthesis; N-acetyl-alpha-D-glucosamine 1-phosphate from alpha-D-glucosamine 6-phosphate (route II): step 2/2. Its pathway is nucleotide-sugar biosynthesis; UDP-N-acetyl-alpha-D-glucosamine biosynthesis; UDP-N-acetyl-alpha-D-glucosamine from N-acetyl-alpha-D-glucosamine 1-phosphate: step 1/1. The protein operates within bacterial outer membrane biogenesis; LPS lipid A biosynthesis. Catalyzes the last two sequential reactions in the de novo biosynthetic pathway for UDP-N-acetylglucosamine (UDP-GlcNAc). The C-terminal domain catalyzes the transfer of acetyl group from acetyl coenzyme A to glucosamine-1-phosphate (GlcN-1-P) to produce N-acetylglucosamine-1-phosphate (GlcNAc-1-P), which is converted into UDP-GlcNAc by the transfer of uridine 5-monophosphate (from uridine 5-triphosphate), a reaction catalyzed by the N-terminal domain. This Sinorhizobium medicae (strain WSM419) (Ensifer medicae) protein is Bifunctional protein GlmU.